A 365-amino-acid polypeptide reads, in one-letter code: Tartrate dehydrogenase/decarboxylase (365 aa).

Mn(2+)-binding residues include D225, D250, and D254.

Belongs to the isocitrate and isopropylmalate dehydrogenases family. As to quaternary structure, homodimer. Mg(2+) serves as cofactor. The cofactor is Mn(2+). Requires K(+) as cofactor.

It localises to the cytoplasm. It catalyses the reaction tartrate + NAD(+) = 2-hydroxy-3-oxosuccinate + NADH + H(+). It carries out the reaction (2R,3S)-tartrate + NAD(+) = 2-hydroxy-3-oxosuccinate + NADH + H(+). The enzyme catalyses (2R,3R)-tartrate + NAD(+) = 2-hydroxy-3-oxosuccinate + NADH + H(+). The catalysed reaction is (2R,3R)-tartrate + H(+) = (R)-glycerate + CO2. It catalyses the reaction (R)-malate + NAD(+) = pyruvate + CO2 + NADH. Its pathway is carbohydrate acid metabolism; tartrate degradation; 2-hydroxy-3-oxosuccinate from L-tartrate: step 1/1. It participates in carbohydrate acid metabolism; tartrate degradation; 2-hydroxy-3-oxosuccinate from meso-tartrate: step 1/1. It functions in the pathway carbohydrate acid metabolism; tartrate degradation; D-glycerate from L-tartrate: step 1/1. Its function is as follows. Has multiple catalytic activities. Apart from catalyzing the oxidation of (+)-tartrate to oxaloglycolate, also converts meso-tartrate to D-glycerate and catalyzes the oxidative decarboxylation of D-malate to pyruvate. The polypeptide is Tartrate dehydrogenase/decarboxylase (Pseudomonas putida (Arthrobacter siderocapsulatus)).